A 397-amino-acid polypeptide reads, in one-letter code: Methyltransferase/ribosomally synthesized type I borosin cyclic peptide precursor mroMa1 (397 aa).

The tract at residues 1–246 is methyltransferase domain; that stretch reads MALKKPGSLT…TTSTFYVPPR (246 aa). Catalysis depends on residues arginine 70, tyrosine 74, and tyrosine 96. Tyrosine 96, histidine 98, valine 101, alanine 128, glutamine 170, glycine 208, serine 239, and threonine 240 together coordinate S-adenosyl-L-methionine. The tract at residues 247 to 365 is clasp domain; that stretch reads TPAPIDPKAV…GPIFVVMRQL (119 aa). Residues 366–388 form a precursor leader region; the sequence is PSAIASGQEPSQEEIARADDATA. 2 positions are modified to N-methylisoleucine: isoleucine 391 and isoleucine 392. An N-methyltyrosine modification is found at tyrosine 393. Isoleucine 394 bears the N-methylisoleucine mark. N-methylvaline is present on valine 395.

In the N-terminal section; belongs to the precorrin methyltransferase family. Homodimer. In terms of processing, mroMA automethylates at Ile-391, Ile-392, Tyr-393, Ile-394 and Val-395 before being processed by the a prolyloligopeptidase which likely forms a peptidyl ester upon removal of the follower propeptide, which then undergoes macrocyclization with the N-terminus of the modified core peptide. Peptide backbone alpha-N-methylations change the physicochemical properties of amide bonds to provide structural constraints and other favorable characteristics including biological membrane permeability to peptides.

It participates in secondary metabolite biosynthesis. Fusion protein of the methyltransferase mroM1 and a type I borosin core peptide; part of the gene cluster that mediates the biosynthesis of a type I borosin, a highly methylated cyclic peptide with potent biological activities. Type I borosins derive from the C-terminus of the fusion protein, and it is the same protein that methylates its own C-terminus using S-adenosyl methionine (SAM). The C-terminus is subsequently cleaved off and macrocyclized by a prolyloligopeptidase to give the final product. This chain is Methyltransferase/ribosomally synthesized type I borosin cyclic peptide precursor mroMa1, found in Mycena rosella (Pink bonnet).